Consider the following 364-residue polypeptide: 2-oxoglutarate-dependent dioxygenase imqE (364 aa).

Residues 73–92 (KQKAAHPPGPNPQRGWSGIG) form a disordered region. The Fe2OG dioxygenase domain maps to 199-315 (DGSELRLLHY…RWSAAYFFKA (117 aa)). Fe cation contacts are provided by H227, D229, and H287. R306 serves as a coordination point for 2-oxoglutarate.

The protein belongs to the iron/ascorbate-dependent oxidoreductase family. Fe(2+) is required as a cofactor.

It functions in the pathway secondary metabolite biosynthesis. Functionally, 2-oxoglutarate-dependent dioxygenase; part of the gene cluster that mediates the biosynthesis of imizoquins A to D, tripeptide-derived alkaloids that serve a protective role against oxidative stress that are essential for normal germination. ImqB is a canonical three-module NRPS that assembles the tripeptide backbone of the imizoquins via condensation of Trp, Tyr, and Leu-derived precursors. N-methylation by imqF and phenol oxidation by imqC, followed by cyclization via the FAD-dependent oxidase imqH carry out the three-step transformation of L-tyrosine into tetrahydroisoquinoline. Importantly, this sequence requires the presence of a free amine in the tyrosine moiety, indicating that isoquinoline formation occurs prior to peptide bond formation. The imidazolidin-4-one ring of imizoquins could form following additional oxidation of the methyl-derived bridgehead carbon by imqH. Lastly, O-methylation by imqG and leucine hydroxylation by imqE complete biosynthesis of the imizoquins. The chain is 2-oxoglutarate-dependent dioxygenase imqE from Aspergillus flavus (strain ATCC 200026 / FGSC A1120 / IAM 13836 / NRRL 3357 / JCM 12722 / SRRC 167).